The chain runs to 527 residues: ATP synthase subunit alpha (527 aa).

Residue 172–179 (GDRQTGKT) participates in ATP binding.

Belongs to the ATPase alpha/beta chains family. F-type ATPases have 2 components, CF(1) - the catalytic core - and CF(0) - the membrane proton channel. CF(1) has five subunits: alpha(3), beta(3), gamma(1), delta(1), epsilon(1). CF(0) has three main subunits: a(1), b(2) and c(9-12). The alpha and beta chains form an alternating ring which encloses part of the gamma chain. CF(1) is attached to CF(0) by a central stalk formed by the gamma and epsilon chains, while a peripheral stalk is formed by the delta and b chains.

It is found in the cell inner membrane. The enzyme catalyses ATP + H2O + 4 H(+)(in) = ADP + phosphate + 5 H(+)(out). Functionally, produces ATP from ADP in the presence of a proton gradient across the membrane. The alpha chain is a regulatory subunit. The protein is ATP synthase subunit alpha of Bacteroides thetaiotaomicron (strain ATCC 29148 / DSM 2079 / JCM 5827 / CCUG 10774 / NCTC 10582 / VPI-5482 / E50).